Here is a 482-residue protein sequence, read N- to C-terminus: UDP-N-acetylmuramate--L-alanine ligase (482 aa).

Residue 111–117 participates in ATP binding; the sequence is GTHGKTT.

It belongs to the MurCDEF family.

It is found in the cytoplasm. It catalyses the reaction UDP-N-acetyl-alpha-D-muramate + L-alanine + ATP = UDP-N-acetyl-alpha-D-muramoyl-L-alanine + ADP + phosphate + H(+). It participates in cell wall biogenesis; peptidoglycan biosynthesis. Functionally, cell wall formation. This is UDP-N-acetylmuramate--L-alanine ligase from Symbiobacterium thermophilum (strain DSM 24528 / JCM 14929 / IAM 14863 / T).